Here is a 176-residue protein sequence, read N- to C-terminus: NAD(P)H-quinone oxidoreductase subunit 6, chloroplastic (176 aa).

A run of 5 helical transmembrane segments spans residues 10-30 (ILLVFLGSGLILGGLGVVLFT), 32-52 (PIYSAFSLGLVFVCISLFYIP), 61-81 (AQLLIYVGAVNVLIVFAVMFM), 90-112 (FHLWTVGDGITSLVCTSILFSLI), and 152-172 (FYLPFELTSIILLVALIGAIA).

This sequence belongs to the complex I subunit 6 family. NDH is composed of at least 16 different subunits, 5 of which are encoded in the nucleus.

It localises to the plastid. The protein localises to the chloroplast thylakoid membrane. The enzyme catalyses a plastoquinone + NADH + (n+1) H(+)(in) = a plastoquinol + NAD(+) + n H(+)(out). The catalysed reaction is a plastoquinone + NADPH + (n+1) H(+)(in) = a plastoquinol + NADP(+) + n H(+)(out). Its function is as follows. NDH shuttles electrons from NAD(P)H:plastoquinone, via FMN and iron-sulfur (Fe-S) centers, to quinones in the photosynthetic chain and possibly in a chloroplast respiratory chain. The immediate electron acceptor for the enzyme in this species is believed to be plastoquinone. Couples the redox reaction to proton translocation, and thus conserves the redox energy in a proton gradient. The chain is NAD(P)H-quinone oxidoreductase subunit 6, chloroplastic (ndhG) from Ceratophyllum demersum (Rigid hornwort).